Consider the following 1245-residue polypeptide: Pesticidal crystal protein Cry5Ba (1245 aa).

Residues 1219-1245 form a disordered region; it reads PLPTDDQSSDGNTTSNTNSNTSMNNNQ. A compositionally biased stretch (low complexity) spans 1222 to 1245; the sequence is TDDQSSDGNTTSNTNSNTSMNNNQ.

It belongs to the delta endotoxin family.

In terms of biological role, promotes colloidosmotic lysis by binding to the midgut epithelial cells of hymenopteran species. The chain is Pesticidal crystal protein Cry5Ba (cry5Ba) from Bacillus thuringiensis.